A 494-amino-acid chain; its full sequence is Probable malate:quinone oxidoreductase (494 aa).

The protein belongs to the MQO family. FAD serves as cofactor.

The enzyme catalyses (S)-malate + a quinone = a quinol + oxaloacetate. The protein operates within carbohydrate metabolism; tricarboxylic acid cycle; oxaloacetate from (S)-malate (quinone route): step 1/1. This Helicobacter hepaticus (strain ATCC 51449 / 3B1) protein is Probable malate:quinone oxidoreductase.